Here is a 273-residue protein sequence, read N- to C-terminus: ABC transporter glutamine-binding protein GlnH (273 aa).

Positions 1-20 (MKKIFSLALISLFAVILLAA) are cleaved as a signal peptide. A lipid anchor (N-palmitoyl cysteine) is attached at C21. C21 is lipidated: S-diacylglycerol cysteine.

It belongs to the bacterial solute-binding protein 3 family. As to quaternary structure, the complex is composed of two ATP-binding proteins (GlnQ), two transmembrane proteins (GlnM and GlnP) and a solute-binding protein (GlnH).

It localises to the cell membrane. Part of the ABC transporter complex GlnHMPQ involved in glutamine transport. In Bacillus subtilis (strain 168), this protein is ABC transporter glutamine-binding protein GlnH (glnH).